The sequence spans 71 residues: Cytochrome c oxidase subunit 8C, mitochondrial (71 aa).

The N-terminal 28 residues, 1–28 (MAHLPRVCPFIRRLRVALLCLRPGHRFA), are a transit peptide targeting the mitochondrion. The Mitochondrial matrix portion of the chain corresponds to 29–39 (HSEPQRQRPAS). A helical transmembrane segment spans residues 40 to 63 (ALEMAVGIVVIFSAFLTPSAYVLS). The Mitochondrial intermembrane segment spans residues 64–71 (NLSQFRRE).

This sequence belongs to the cytochrome c oxidase VIII family. As to quaternary structure, component of the cytochrome c oxidase (complex IV, CIV), a multisubunit enzyme composed of 14 subunits. The complex is composed of a catalytic core of 3 subunits MT-CO1, MT-CO2 and MT-CO3, encoded in the mitochondrial DNA, and 11 supernumerary subunits COX4I, COX5A, COX5B, COX6A, COX6B, COX6C, COX7A, COX7B, COX7C, COX8 and NDUFA4, which are encoded in the nuclear genome. The complex exists as a monomer or a dimer and forms supercomplexes (SCs) in the inner mitochondrial membrane with NADH-ubiquinone oxidoreductase (complex I, CI) and ubiquinol-cytochrome c oxidoreductase (cytochrome b-c1 complex, complex III, CIII), resulting in different assemblies (supercomplex SCI(1)III(2)IV(1) and megacomplex MCI(2)III(2)IV(2)).

The protein resides in the mitochondrion inner membrane. It functions in the pathway energy metabolism; oxidative phosphorylation. Component of the cytochrome c oxidase, the last enzyme in the mitochondrial electron transport chain which drives oxidative phosphorylation. The respiratory chain contains 3 multisubunit complexes succinate dehydrogenase (complex II, CII), ubiquinol-cytochrome c oxidoreductase (cytochrome b-c1 complex, complex III, CIII) and cytochrome c oxidase (complex IV, CIV), that cooperate to transfer electrons derived from NADH and succinate to molecular oxygen, creating an electrochemical gradient over the inner membrane that drives transmembrane transport and the ATP synthase. Cytochrome c oxidase is the component of the respiratory chain that catalyzes the reduction of oxygen to water. Electrons originating from reduced cytochrome c in the intermembrane space (IMS) are transferred via the dinuclear copper A center (CU(A)) of subunit 2 and heme A of subunit 1 to the active site in subunit 1, a binuclear center (BNC) formed by heme A3 and copper B (CU(B)). The BNC reduces molecular oxygen to 2 water molecules using 4 electrons from cytochrome c in the IMS and 4 protons from the mitochondrial matrix. The sequence is that of Cytochrome c oxidase subunit 8C, mitochondrial (COX8C) from Eulemur fulvus fulvus (Brown lemur).